The primary structure comprises 307 residues: Protoheme IX farnesyltransferase (307 aa).

8 helical membrane-spanning segments follow: residues 32-52 (VVEL…RGIP), 54-74 (LWLV…AGAF), 105-125 (LVFA…FTNW), 126-146 (LAAG…TLIL), 169-189 (WAVV…VIFL), 222-242 (VVGL…LLLI), 244-264 (VARM…WFLY), and 287-307 (GSIA…LLPF).

This sequence belongs to the UbiA prenyltransferase family. Protoheme IX farnesyltransferase subfamily.

The protein resides in the cell membrane. The catalysed reaction is heme b + (2E,6E)-farnesyl diphosphate + H2O = Fe(II)-heme o + diphosphate. It participates in porphyrin-containing compound metabolism; heme O biosynthesis; heme O from protoheme: step 1/1. Its function is as follows. Converts heme B (protoheme IX) to heme O by substitution of the vinyl group on carbon 2 of heme B porphyrin ring with a hydroxyethyl farnesyl side group. The sequence is that of Protoheme IX farnesyltransferase from Leifsonia xyli subsp. xyli (strain CTCB07).